The chain runs to 698 residues: MFYGFLLLYPLLSLCLEHVISLSKKGKPTLGFVIMRNAVDIKTLSDVKDRVKNEKRTHCLVVNKYKVNDVLKNKEAKFYFLNVFRFPSVLKLREYEGNLMETGQYNGEVLRFIHSYVERLGGGGTHVGGKADSKADGKVNHDVSDQVVAQQTDQQMDQQMDQQTDQQMDQQMDQKRDAALEDCRLIPLNARFNKALQELMQREGKEIMEGLDMHLEEGDAGNVTVEGVAMEDDSTAHDSVQRNEGKTPKGPLDGQWPPLEELFRIIKKEGIQISIIQLQFGYDNMNTSEILRKIFPTESEVIHKYEMIGHIAHLNFCERFENYKKVIAEIILDKNKSIKTVINKMDTLKNLHRTFNIELLAGEKNYLTTLKENDIKVKLNYELIYWNSKLKKERDRIYDLVENNSIIVDLFAGVGIFSLHLSKKKCLCFSNDINSHAYNFMNVNIKLNKRKSILTYNLDARAFVQMLLGLDIFSSDKTTLSMQLSEQNWKNISLDFINSPDQNNVDTGKRKKRESDRVGHVDDDITANATIDKKKKLRHADTNDPLEERPLGLAATHHGEENIQSVERTNNDSEKTKEDAPRDVTHQVDINLGIYGDIHVLMNLPQTAFEFLDIFRELLDTYSTDQKDFQGKCRRDQMRNVFIHCYFFSKPELFYEDAERNIRMQLGGLPREMKITEIRKVSPSKLMYVAEFNLKDVF.

The interval 233-254 (DSTAHDSVQRNEGKTPKGPLDG) is disordered. Positions 234–247 (STAHDSVQRNEGKT) are enriched in basic and acidic residues. S-adenosyl-L-methionine-binding positions include arginine 394, 432 to 433 (DI), and 459 to 460 (DA). 2 disordered regions span residues 500–522 (PDQN…GHVD) and 534–582 (KKKL…DAPR). 3 stretches are compositionally biased toward basic and acidic residues: residues 513-522 (RESDRVGHVD), 539-550 (HADTNDPLEERP), and 569-582 (TNND…DAPR). Asparagine 603 is a binding site for S-adenosyl-L-methionine.

Belongs to the class I-like SAM-binding methyltransferase superfamily. TRM5/TYW2 family. As to quaternary structure, monomer.

It localises to the mitochondrion matrix. The protein resides in the nucleus. It is found in the cytoplasm. It catalyses the reaction guanosine(37) in tRNA + S-adenosyl-L-methionine = N(1)-methylguanosine(37) in tRNA + S-adenosyl-L-homocysteine + H(+). Its function is as follows. Specifically methylates the N1 position of guanosine-37 in various cytoplasmic and mitochondrial tRNAs. Methylation is not dependent on the nature of the nucleoside 5' of the target nucleoside. This is the first step in the biosynthesis of wybutosine (yW), a modified base adjacent to the anticodon of tRNAs and required for accurate decoding. This Plasmodium knowlesi (strain H) protein is tRNA (guanine(37)-N(1))-methyltransferase.